A 943-amino-acid chain; its full sequence is Translation initiation factor IF-2 (943 aa).

Residues 46-359 are disordered; the sequence is IKGMLSKQSA…MPQRKERPLP (314 aa). A compositionally biased stretch (low complexity) spans 57-76; it reads KAPSSQAAKTPAKAAKTSSA. Composition is skewed to basic and acidic residues over residues 92–103 and 110–124; these read SNDHADVAEHSQ and AKQENKPARSNKTSD. A compositionally biased stretch (polar residues) spans 130–141; that stretch reads SKSTILRPRSTQ. The segment covering 142-190 has biased composition (low complexity); that stretch reads TAHTNTNHNRGGNTASANNTANGRNSNRSNNNNNNRSANNANRSGNNNR. Composition is skewed to basic and acidic residues over residues 191-205, 239-250, and 259-271; these read SNERNRNDRNRRFDN, ASERQQPKRQEA, and KRSEQPRTERPRT. Low complexity-rich tracts occupy residues 289 to 299 and 315 to 330; these read PAAAAPKPASA and NFGRSNSYGNRNGFNR. Residues 331–342 show a composition bias toward basic residues; it reads NNRRNKKNKRRQ. A compositionally biased stretch (basic and acidic residues) spans 346 to 358; that stretch reads PKKEMPQRKERPL. In terms of domain architecture, tr-type G spans 444-613; sequence PRPPVVTIMG…LLEADVLELK (170 aa). Positions 453 to 460 are G1; the sequence is GHVDHGKT. Residue 453-460 coordinates GTP; it reads GHVDHGKT. A G2 region spans residues 478–482; that stretch reads GITQH. Residues 499–502 are G3; sequence DTPG. Residues 499-503 and 553-556 each bind GTP; these read DTPGH and NKID. The segment at 553–556 is G4; it reads NKID. The tract at residues 589-591 is G5; that stretch reads SAK.

It belongs to the TRAFAC class translation factor GTPase superfamily. Classic translation factor GTPase family. IF-2 subfamily.

The protein localises to the cytoplasm. One of the essential components for the initiation of protein synthesis. Protects formylmethionyl-tRNA from spontaneous hydrolysis and promotes its binding to the 30S ribosomal subunits. Also involved in the hydrolysis of GTP during the formation of the 70S ribosomal complex. The polypeptide is Translation initiation factor IF-2 (Lacticaseibacillus casei (strain BL23) (Lactobacillus casei)).